A 199-amino-acid chain; its full sequence is Putative acetyltransferase SACOL2570 (199 aa).

This sequence belongs to the transferase hexapeptide repeat family.

This Staphylococcus aureus (strain COL) protein is Putative acetyltransferase SACOL2570.